A 369-amino-acid polypeptide reads, in one-letter code: Peptide chain release factor 2 (369 aa).

At Gln251 the chain carries N5-methylglutamine.

Belongs to the prokaryotic/mitochondrial release factor family. Methylated by PrmC. Methylation increases the termination efficiency of RF2.

The protein resides in the cytoplasm. Functionally, peptide chain release factor 2 directs the termination of translation in response to the peptide chain termination codons UGA and UAA. This Chlamydia pneumoniae (Chlamydophila pneumoniae) protein is Peptide chain release factor 2 (prfB).